The following is a 251-amino-acid chain: 3-deoxy-manno-octulosonate cytidylyltransferase (251 aa).

It belongs to the KdsB family.

The protein resides in the cytoplasm. It carries out the reaction 3-deoxy-alpha-D-manno-oct-2-ulosonate + CTP = CMP-3-deoxy-beta-D-manno-octulosonate + diphosphate. The protein operates within nucleotide-sugar biosynthesis; CMP-3-deoxy-D-manno-octulosonate biosynthesis; CMP-3-deoxy-D-manno-octulosonate from 3-deoxy-D-manno-octulosonate and CTP: step 1/1. Its pathway is bacterial outer membrane biogenesis; lipopolysaccharide biosynthesis. Functionally, activates KDO (a required 8-carbon sugar) for incorporation into bacterial lipopolysaccharide in Gram-negative bacteria. This is 3-deoxy-manno-octulosonate cytidylyltransferase from Sodalis glossinidius (strain morsitans).